We begin with the raw amino-acid sequence, 275 residues long: 4-diphosphocytidyl-2-C-methyl-D-erythritol kinase (275 aa).

Residue K14 is part of the active site. 98 to 108 (PMGAGLGGGSS) provides a ligand contact to ATP. Residue D140 is part of the active site.

This sequence belongs to the GHMP kinase family. IspE subfamily.

It carries out the reaction 4-CDP-2-C-methyl-D-erythritol + ATP = 4-CDP-2-C-methyl-D-erythritol 2-phosphate + ADP + H(+). It participates in isoprenoid biosynthesis; isopentenyl diphosphate biosynthesis via DXP pathway; isopentenyl diphosphate from 1-deoxy-D-xylulose 5-phosphate: step 3/6. Its function is as follows. Catalyzes the phosphorylation of the position 2 hydroxy group of 4-diphosphocytidyl-2C-methyl-D-erythritol. The protein is 4-diphosphocytidyl-2-C-methyl-D-erythritol kinase of Francisella tularensis subsp. holarctica (strain FTNF002-00 / FTA).